A 227-amino-acid polypeptide reads, in one-letter code: DNA repair protein RecO (227 aa).

The protein belongs to the RecO family.

Functionally, involved in DNA repair and RecF pathway recombination. The protein is DNA repair protein RecO of Pseudomonas entomophila (strain L48).